A 380-amino-acid chain; its full sequence is E3 ubiquitin-protein ligase PHF7 (380 aa).

Residues 1–23 (MRTIKEKKEHPRLRKTARTKKVT) are disordered. The segment covering 10–23 (HPRLRKTARTKKVT) has biased composition (basic residues). Residues 30-68 (GPVCLLCFQEPGDPEKLGEFLQKDNLCVHYFCLILSSKL) form a C2HC pre-PHD-type zinc finger. The Zn(2+) site is built by Cys-33, Cys-36, His-58, and Cys-61. The interval 67 to 92 (KLPQKGQPNRGLHGFMPEDIKKEAAR) is required for interaction and ubiquitination of the nucleosome core particle. The PHD-type zinc finger occupies 96-145 (KVCFVCKRKGAAIRCQKDQCVQNFHLPCGQERGCLSQFFGEYKSYCGKHR). Zn(2+) is bound by residues Cys-98, Cys-101, Cys-110, Cys-115, His-120, Cys-123, Cys-141, His-144, Cys-159, Cys-162, Cys-178, Cys-179, His-185, Cys-188, Cys-203, Cys-206, Cys-247, Cys-252, Cys-272, Cys-275, His-281, Cys-284, Cys-296, and Cys-299. The tract at residues 150 to 306 (IHQRSFGESC…NECLPASTED (157 aa)) is required for interaction with ubiquitinated UBE2D2. An RING-type; degenerate zinc finger spans residues 159–207 (CVLCCEDLSRASVENIRSPCCSQAIYHRKCIQKYAHTSAKHFFKCPQCN). A required for association with and ubiquitination of H3 region spans residues 243 to 300 (RYQHCDAPICLYEQGRDSFEDEGRWRLILCATCGSHGTHRDCSSLRPNSKKWECNECL). Low complexity predominate over residues 352-367 (EKPESSSGSSCQSWRS). The disordered stretch occupies residues 352–380 (EKPESSSGSSCQSWRSKGIKVTKDCKKSK).

Interacts with MEF2C; the interaction promotes MEF2C binding to its transcription targets. Interacts with GATA4; the interaction promotes GATA4 binding to its transcription targets. Interacts with UBE2D2; the interaction inhibits cleavage of PHF7 and promotes association of the complex with the nucleosome core particle.

It localises to the nucleus. It carries out the reaction S-ubiquitinyl-[E2 ubiquitin-conjugating enzyme]-L-cysteine + [acceptor protein]-L-lysine = [E2 ubiquitin-conjugating enzyme]-L-cysteine + N(6)-ubiquitinyl-[acceptor protein]-L-lysine.. It participates in protein modification; protein ubiquitination. Its function is as follows. E3 ubiquitin-protein ligase which ubiquitinates histone H3 at 'Lys-14'. Required for male fertility, via inhibition of SPOP-mediated BRDT degradation when in the presence of acetylated histone H4 in early condensing spermatids. Stabilization of BRDT allows it to facilitate histone removal in early condensing spermatids and promote the progression of histone-to-protamine exchange. Promotes the expression of steroidogenesis proteins in the testes, and as a result plays a role in maintaining testosterone levels and repressing osteoclastogenesis. Promotes transcription of cardiac enhancer genes by facilitating binding of cardiac transcription factors such as MEF2C and GATA4 to target gene promoters. Ubiquitinates histone H4. Ubiquitinates histone H2A and H3 as part of the nucleosome core particle. This is E3 ubiquitin-protein ligase PHF7 from Rattus norvegicus (Rat).